We begin with the raw amino-acid sequence, 303 residues long: L(+)-tartrate dehydratase subunit alpha (303 aa).

Residues Cys71, Cys190, and Cys277 each coordinate iron-sulfur cluster.

This sequence belongs to the class-I fumarase family. As to quaternary structure, tetramer of two alpha and two beta subunits. The cofactor is iron-sulfur cluster.

It carries out the reaction (2R,3R)-tartrate = oxaloacetate + H2O. The sequence is that of L(+)-tartrate dehydratase subunit alpha (ttdA) from Escherichia coli O6:K15:H31 (strain 536 / UPEC).